Here is a 592-residue protein sequence, read N- to C-terminus: Threonine--tRNA ligase (592 aa).

Positions 193–488 are catalytic; sequence DHRKLGPALG…LIEHYGGAFP (296 aa). Cys-284, His-335, and His-465 together coordinate Zn(2+).

The protein belongs to the class-II aminoacyl-tRNA synthetase family. In terms of assembly, homodimer. Zn(2+) serves as cofactor.

Its subcellular location is the cytoplasm. It carries out the reaction tRNA(Thr) + L-threonine + ATP = L-threonyl-tRNA(Thr) + AMP + diphosphate + H(+). Functionally, catalyzes the attachment of threonine to tRNA(Thr) in a two-step reaction: L-threonine is first activated by ATP to form Thr-AMP and then transferred to the acceptor end of tRNA(Thr). Also edits incorrectly charged L-seryl-tRNA(Thr). This is Threonine--tRNA ligase from Treponema pallidum (strain Nichols).